A 423-amino-acid chain; its full sequence is MKYTLLGFGISNKEILKYLLKKGERVFVSEGKKLSEVDKEFLNSFGVDFEENGHTEKVLDSDVILVSPGIHFENDIIKKAKENNIKIDTEISFCLKEFEKINWFPYVIAVTGSVGKSTTVSMIQHVLNKYKRTLLAGNIGIPIAKLLNDDLRADYLVLEVSSFQLFWSDKFKPNISSILNIYPNHLNWHPEMSHYINSKFKITLSQDENDFFVYNPNDEYIVKNLGKVKAKKVPFKYDFEIHQLPEHLRYKQTIENVAAAKTIVEVAGFEFNIDFLEDFEKLPHRMEYVTEINGVKFFNDSKATNAAAVIRAVENFDGKLHLIMAGIGKNEDYTLLRKVLKNSVKTVALVGPIAKDVKPYLDGINFMECSSINEAVNQLFRIANPGDVIMLSPGGASFDAFKNFEERGEYFKQLVFQLKEGKS.

112–118 provides a ligand contact to ATP; sequence GSVGKST.

It belongs to the MurCDEF family.

The protein resides in the cytoplasm. It carries out the reaction UDP-N-acetyl-alpha-D-muramoyl-L-alanine + D-glutamate + ATP = UDP-N-acetyl-alpha-D-muramoyl-L-alanyl-D-glutamate + ADP + phosphate + H(+). It participates in cell wall biogenesis; peptidoglycan biosynthesis. In terms of biological role, cell wall formation. Catalyzes the addition of glutamate to the nucleotide precursor UDP-N-acetylmuramoyl-L-alanine (UMA). This chain is UDP-N-acetylmuramoylalanine--D-glutamate ligase, found in Thermosipho africanus (strain TCF52B).